The sequence spans 291 residues: MGMDRSDMNKNLAQMLKGGVIMDVINKEQAIIAEKAGACAVMALERVPADIRKQGGVARMSDPKMIKEIRESVTIPVMAKVRIGHFVEAEILQSLGIDFIDESEVLTPADDSYHIDKKAFKVPFVCGARNLGEALRRIGEGASMIRTKGEAGTGNVVEAVKHMRTVMDEIRRVKNAAKEEIMTIAKELGAPYDLVQYVWMNGRLPVVNFAAGGVATPADAALMIRLGAEGVFVGSGIFKSENPEKRARAIVMAAAYYDDPKVLEEVSEDLGEPMYGLEISDIKDRYAERGW.

Residue Asp23 participates in D-ribose 5-phosphate binding. Lys80 acts as the Schiff-base intermediate with D-ribose 5-phosphate in catalysis. Gly152 is a D-ribose 5-phosphate binding site. Arg164 provides a ligand contact to D-glyceraldehyde 3-phosphate. D-ribose 5-phosphate-binding positions include Gly213 and 234–235; that span reads GS.

This sequence belongs to the PdxS/SNZ family. In terms of assembly, in the presence of PdxT, forms a dodecamer of heterodimers.

It catalyses the reaction aldehydo-D-ribose 5-phosphate + D-glyceraldehyde 3-phosphate + L-glutamine = pyridoxal 5'-phosphate + L-glutamate + phosphate + 3 H2O + H(+). It participates in cofactor biosynthesis; pyridoxal 5'-phosphate biosynthesis. Catalyzes the formation of pyridoxal 5'-phosphate from ribose 5-phosphate (RBP), glyceraldehyde 3-phosphate (G3P) and ammonia. The ammonia is provided by the PdxT subunit. Can also use ribulose 5-phosphate and dihydroxyacetone phosphate as substrates, resulting from enzyme-catalyzed isomerization of RBP and G3P, respectively. The polypeptide is Pyridoxal 5'-phosphate synthase subunit PdxS (Clostridium acetobutylicum (strain ATCC 824 / DSM 792 / JCM 1419 / IAM 19013 / LMG 5710 / NBRC 13948 / NRRL B-527 / VKM B-1787 / 2291 / W)).